Reading from the N-terminus, the 457-residue chain is Argininosuccinate lyase (457 aa).

This sequence belongs to the lyase 1 family. Argininosuccinate lyase subfamily.

It localises to the cytoplasm. The catalysed reaction is 2-(N(omega)-L-arginino)succinate = fumarate + L-arginine. It participates in amino-acid biosynthesis; L-arginine biosynthesis; L-arginine from L-ornithine and carbamoyl phosphate: step 3/3. This is Argininosuccinate lyase from Haemophilus influenzae (strain 86-028NP).